Reading from the N-terminus, the 293-residue chain is tRNA-cytidine(32) 2-sulfurtransferase (293 aa).

A PP-loop motif motif is present at residues 62–67; that stretch reads SGGKDS. [4Fe-4S] cluster is bound by residues C137, C140, and C228.

This sequence belongs to the TtcA family. Homodimer. Mg(2+) is required as a cofactor. [4Fe-4S] cluster serves as cofactor.

It is found in the cytoplasm. It carries out the reaction cytidine(32) in tRNA + S-sulfanyl-L-cysteinyl-[cysteine desulfurase] + AH2 + ATP = 2-thiocytidine(32) in tRNA + L-cysteinyl-[cysteine desulfurase] + A + AMP + diphosphate + H(+). Its pathway is tRNA modification. Its function is as follows. Catalyzes the ATP-dependent 2-thiolation of cytidine in position 32 of tRNA, to form 2-thiocytidine (s(2)C32). The sulfur atoms are provided by the cysteine/cysteine desulfurase (IscS) system. The polypeptide is tRNA-cytidine(32) 2-sulfurtransferase (Brucella suis (strain ATCC 23445 / NCTC 10510)).